Here is a 239-residue protein sequence, read N- to C-terminus: Ribosomal RNA small subunit methyltransferase G (239 aa).

Residues glycine 78, phenylalanine 83, 129 to 130, and arginine 148 contribute to the S-adenosyl-L-methionine site; that span reads AE.

Belongs to the methyltransferase superfamily. RNA methyltransferase RsmG family.

Its subcellular location is the cytoplasm. Specifically methylates the N7 position of a guanine in 16S rRNA. The polypeptide is Ribosomal RNA small subunit methyltransferase G (Clostridium botulinum (strain Kyoto / Type A2)).